The primary structure comprises 425 residues: MGSPFKDHHTLHPSLVRKLIPWTFYAMVPLVLFRVYLYPYPLHHTTTTILTSSPVSPPPALLEDETSCDYTDGNWVPDRRDPLYNGSTCGTIKEGQSCIAHGRPDMGYLYWRWKPKQCKLPRFEPNTFLQLLRNKHLAFVGDSMARNQLESLLCMLSSVSPPNLVYRDGEENKFRRWYFESHNFSISVYWSPFLVRGVEKSNTGLNHNQLFLDHVDERWAADMNGIDMVVLSIGHWFLHPAVYYEGDQVLGCHYCPDLNHTEIGFYDILRKAIKTTLKALVDRKGPNDNGFDALVTTFSPAHFEGDWDKLGACPKTEPCKEGEKTLEGMDAEMRQVEVEEVEAAKMNSVQLEKFRLEALDVSKLSLMRPDGHPGPYMHPFPFAYGVAERVQNDCVHWCLPGPIDTWNEILLEVIKKWEYASRREQ.

At 1 to 18 (MGSPFKDHHTLHPSLVRK) the chain is on the cytoplasmic side. The helical; Signal-anchor for type II membrane protein transmembrane segment at 19–38 (LIPWTFYAMVPLVLFRVYLY) threads the bilayer. Over 39–425 (PYPLHHTTTT…KWEYASRREQ (387 aa)) the chain is Lumenal. 4 disulfides stabilise this stretch: Cys-68-Cys-118, Cys-89-Cys-154, Cys-98-Cys-398, and Cys-313-Cys-394. Asn-85 carries N-linked (GlcNAc...) asparagine glycosylation. Positions 141–143 (GDS) match the GDS motif motif. The Nucleophile role is filled by Ser-143. Residues Asn-183 and Asn-259 are each glycosylated (N-linked (GlcNAc...) asparagine). Asp-393 serves as the catalytic Proton donor. The short motif at 393 to 396 (DCVH) is the DXXH motif element. The active-site Proton acceptor is the His-396.

It belongs to the PC-esterase family. TBL subfamily.

The protein resides in the golgi apparatus membrane. Xyloglucan acetyltransferase that catalyzes the acetylation of fucosylated Gal residues on xyloglucan side chains. Predominantly catalyze 6-O-monoacetylation of Gal residues in the Fuc-Gal-Xyl trisaccharide side chains of xyloglucan oligomers. The sequence is that of Xyloglucan O-acetyltransferase 2 from Populus trichocarpa (Western balsam poplar).